The chain runs to 301 residues: HTH-type transcriptional activator NagR (301 aa).

One can recognise an HTH lysR-type domain in the interval 6-63 (IDLNLLVVFNQLLLDRSVSTAGEKLGLTQPAVSNSLKRLRAALKDDLFLRTSKGMEPT). The segment at residues 23–42 (VSTAGEKLGLTQPAVSNSLK) is a DNA-binding region (H-T-H motif).

Belongs to the LysR transcriptional regulatory family.

Its function is as follows. May regulate the expression of the naphthalene (nagA-F) and salicylate (nagG-M) metabolism genes. The sequence is that of HTH-type transcriptional activator NagR from Ralstonia sp.